Reading from the N-terminus, the 439-residue chain is UDP-N-acetylmuramoylalanine--D-glutamate ligase (439 aa).

An ATP-binding site is contributed by 116–122 (GSNGKTT).

The protein belongs to the MurCDEF family.

The protein localises to the cytoplasm. The enzyme catalyses UDP-N-acetyl-alpha-D-muramoyl-L-alanine + D-glutamate + ATP = UDP-N-acetyl-alpha-D-muramoyl-L-alanyl-D-glutamate + ADP + phosphate + H(+). It functions in the pathway cell wall biogenesis; peptidoglycan biosynthesis. Cell wall formation. Catalyzes the addition of glutamate to the nucleotide precursor UDP-N-acetylmuramoyl-L-alanine (UMA). The polypeptide is UDP-N-acetylmuramoylalanine--D-glutamate ligase (Shewanella oneidensis (strain ATCC 700550 / JCM 31522 / CIP 106686 / LMG 19005 / NCIMB 14063 / MR-1)).